Here is a 256-residue protein sequence, read N- to C-terminus: Protein FixA (256 aa).

Belongs to the ETF beta-subunit/FixA family. As to quaternary structure, heterodimer of FixA and FixB.

It functions in the pathway amine and polyamine metabolism; carnitine metabolism. Functionally, required for anaerobic carnitine reduction. May bring reductant to CaiA. The sequence is that of Protein FixA from Escherichia coli O81 (strain ED1a).